A 137-amino-acid chain; its full sequence is Protein archease (137 aa).

Ca(2+)-binding residues include Asp11, Asp136, and Ile137.

Belongs to the archease family.

Functionally, activates the tRNA-splicing ligase complex by facilitating the enzymatic turnover of catalytic subunit RtcB. Acts by promoting the guanylylation of RtcB, a key intermediate step in tRNA ligation. Can also alter the NTP specificity of RtcB such that ATP, dGTP or ITP is used efficiently. This Archaeoglobus fulgidus (strain ATCC 49558 / DSM 4304 / JCM 9628 / NBRC 100126 / VC-16) protein is Protein archease.